Here is a 331-residue protein sequence, read N- to C-terminus: Putative ankyrin repeat protein FPV012 (331 aa).

ANK repeat units follow at residues 11 to 40 (DGYT…NPNT), 44 to 73 (DSYT…NVDK), 77 to 106 (DGYT…NPNY), and 110 to 139 (YGIT…NCNQ).

The sequence is that of Putative ankyrin repeat protein FPV012 from Vertebrata (FPV).